A 132-amino-acid chain; its full sequence is Fluoride-specific ion channel FluC (132 aa).

4 consecutive transmembrane segments (helical) span residues 6-26, 41-61, 73-93, and 104-124; these read VLQL…RFIV, GTLV…ILMI, FLIV…FETY, and AMLN…LGIW. 2 residues coordinate Na(+): glycine 80 and threonine 83.

Belongs to the fluoride channel Fluc/FEX (TC 1.A.43) family.

It localises to the cell inner membrane. It catalyses the reaction fluoride(in) = fluoride(out). Na(+) is not transported, but it plays an essential structural role and its presence is essential for fluoride channel function. Fluoride-specific ion channel. Important for reducing fluoride concentration in the cell, thus reducing its toxicity. The sequence is that of Fluoride-specific ion channel FluC from Hydrogenovibrio crunogenus (strain DSM 25203 / XCL-2) (Thiomicrospira crunogena).